A 405-amino-acid chain; its full sequence is Tyrosine--tRNA ligase (405 aa).

Tyr-35 contacts L-tyrosine. The 'HIGH' region signature appears at 40 to 49 (ATSSSLHIGH). Positions 166 and 170 each coordinate L-tyrosine. A 'KMSKS' region motif is present at residues 226-230 (KMGKS). An ATP-binding site is contributed by Lys-229. Residues 340 to 404 (VLLINLMLDS…VGKKKFLRIV (65 aa)) form the S4 RNA-binding domain.

Belongs to the class-I aminoacyl-tRNA synthetase family. TyrS type 1 subfamily. Homodimer.

Its subcellular location is the cytoplasm. The catalysed reaction is tRNA(Tyr) + L-tyrosine + ATP = L-tyrosyl-tRNA(Tyr) + AMP + diphosphate + H(+). Functionally, catalyzes the attachment of tyrosine to tRNA(Tyr) in a two-step reaction: tyrosine is first activated by ATP to form Tyr-AMP and then transferred to the acceptor end of tRNA(Tyr). This chain is Tyrosine--tRNA ligase, found in Borreliella afzelii (strain PKo) (Borrelia afzelii).